Here is a 331-residue protein sequence, read N- to C-terminus: tRNA uridine(34) hydroxylase (331 aa).

The 97-residue stretch at 122 to 218 (KENRCLVLDV…YGQAVGTGKW (97 aa)) folds into the Rhodanese domain. Cys-178 serves as the catalytic Cysteine persulfide intermediate.

This sequence belongs to the TrhO family.

The enzyme catalyses uridine(34) in tRNA + AH2 + O2 = 5-hydroxyuridine(34) in tRNA + A + H2O. In terms of biological role, catalyzes oxygen-dependent 5-hydroxyuridine (ho5U) modification at position 34 in tRNAs. The polypeptide is tRNA uridine(34) hydroxylase (Chlamydia caviae (strain ATCC VR-813 / DSM 19441 / 03DC25 / GPIC) (Chlamydophila caviae)).